The following is a 147-amino-acid chain: Ribonuclease H (147 aa).

Residues M1–K142 form the RNase H type-1 domain. Positions 9, 47, 69, and 134 each coordinate Mg(2+).

It belongs to the RNase H family. As to quaternary structure, monomer. The cofactor is Mg(2+).

It localises to the cytoplasm. It carries out the reaction Endonucleolytic cleavage to 5'-phosphomonoester.. Endonuclease that specifically degrades the RNA of RNA-DNA hybrids. In Acetivibrio thermocellus (strain ATCC 27405 / DSM 1237 / JCM 9322 / NBRC 103400 / NCIMB 10682 / NRRL B-4536 / VPI 7372) (Clostridium thermocellum), this protein is Ribonuclease H.